Here is a 172-residue protein sequence, read N- to C-terminus: UPF0254 protein Mlab_1743 (172 aa).

This sequence belongs to the UPF0254 family.

This Methanocorpusculum labreanum (strain ATCC 43576 / DSM 4855 / Z) protein is UPF0254 protein Mlab_1743.